Here is a 533-residue protein sequence, read N- to C-terminus: Tyrosine ammonia-lyase (533 aa).

Catalysis depends on Tyr-57, which acts as the Proton donor/acceptor. His-87 is a binding site for substrate. The segment at residues 146–148 (ASG) is a cross-link (5-imidazolinone (Ala-Gly)). Ser-147 is subject to 2,3-didehydroalanine (Ser). Substrate is bound by residues Asn-200 and Arg-305.

The protein belongs to the TAL/TAM family. In terms of assembly, homotetramer; dimer of dimers. Contains an active site 4-methylidene-imidazol-5-one (MIO), which is formed autocatalytically by cyclization and dehydration of residues Ala-Ser-Gly.

It carries out the reaction L-tyrosine = (E)-4-coumarate + NH4(+). The catalysed reaction is L-tyrosine = 3-amino-3-(4-hydroxyphenyl)propanoate. Functionally, has ammonia-lyase and, to a lesser extent, aminomutase activity. Catalyzes the rearrangement of L-tyrosine to R-beta-tyrosine and S-beta-tyrosine. Does not accept L-histidine or L-phenylalanine as substrates. This chain is Tyrosine ammonia-lyase, found in Cupriavidus metallidurans (strain ATCC 43123 / DSM 2839 / NBRC 102507 / CH34) (Ralstonia metallidurans).